Here is a 1398-residue protein sequence, read N- to C-terminus: MAP-homologous protein 1 (1398 aa).

Residue Met-1 is modified to N-acetylmethionine. The interval 21 to 77 is disordered; the sequence is GWLVRPSASTSKSSRPGKSESKANSVAPDIQMDTARPPVFETSVDSSSSILSSNDKG. Residues 27–36 show a composition bias toward polar residues; that stretch reads SASTSKSSRP. The segment covering 63–73 has biased composition (low complexity); that stretch reads SVDSSSSILSS. The residue at position 81 (Ser-81) is a Phosphoserine. Disordered regions lie at residues 90–144, 156–186, and 191–210; these read NQRA…APAP, HRKK…GAAI, and TATI…PPSY. Composition is skewed to polar residues over residues 91–102 and 114–123; these read QRANAGSTSVPT and VVETNLSNVE. Basic and acidic residues predominate over residues 159-186; that stretch reads KDQEQQEKERERKERSPSPTHVDRGAAI. Lys-221 is covalently cross-linked (Glycyl lysine isopeptide (Lys-Gly) (interchain with G-Cter in ubiquitin)). Residue Thr-222 is modified to Phosphothreonine. 4 disordered regions span residues 244 to 270, 296 to 382, 395 to 428, and 515 to 548; these read HSPE…PDPR, SSAS…PSSH, GNNN…SSME, and NPEE…NNSQ. 4 positions are modified to phosphoserine: Ser-309, Ser-311, Ser-354, and Ser-357. The span at 357–371 shows a compositional bias: low complexity; the sequence is SIVDTVDSNSDVSSS. Over residues 372-381 the composition is skewed to polar residues; that stretch reads AQNNNQTPSS. Residues 396–426 show a composition bias toward low complexity; the sequence is NNNNNSTNASSLSANVNNPDTSSTSLWSSSS. Residues 521–538 show a composition bias toward basic and acidic residues; sequence ANAKSKEEMAPQKQNEVE. The residue at position 577 (Thr-577) is a Phosphothreonine. Positions 605–615 are enriched in low complexity; it reads STSSLASMVSS. Disordered stretches follow at residues 605 to 630, 1148 to 1169, and 1203 to 1223; these read STSS…EILP, LKSP…PNSE, and DAED…HEDV. Residues 1160-1169 show a composition bias toward polar residues; it reads GGNQAQPNSE. Positions 1208-1223 are enriched in basic and acidic residues; sequence VEFREGDDSNVNHEDV. The tract at residues 1227-1258 is tau/MAP repeat-like; that stretch reads DQQFRDEVDIKNKYSIIKRELEHEKLVGGGDL. The segment at 1313–1372 is disordered; it reads QEETAFRTKDEQQSSQSNDSSANASPTTDPISTGSNTSRTNDNAHIPPTDAPGFDKFMNN. Over residues 1325 to 1337 the composition is skewed to low complexity; that stretch reads QSSQSNDSSANAS. The segment covering 1338–1355 has biased composition (polar residues); the sequence is PTTDPISTGSNTSRTNDN.

Its subcellular location is the cytoplasm. It localises to the cytoskeleton. It is found in the spindle. Essential for the formation and/or stabilization of microtubules. Binds to microtubules in vitro. This Saccharomyces cerevisiae (strain ATCC 204508 / S288c) (Baker's yeast) protein is MAP-homologous protein 1 (MHP1).